A 359-amino-acid polypeptide reads, in one-letter code: 3-dehydroquinate synthase (359 aa).

NAD(+) is bound by residues 72–77, 106–110, 130–131, K143, K152, and 170–173; these read EGEIHK, GVIGD, TS, and CLKT. The Zn(2+) site is built by E185, H248, and H264.

Belongs to the sugar phosphate cyclases superfamily. Dehydroquinate synthase family. Co(2+) serves as cofactor. Zn(2+) is required as a cofactor. It depends on NAD(+) as a cofactor.

It is found in the cytoplasm. The catalysed reaction is 7-phospho-2-dehydro-3-deoxy-D-arabino-heptonate = 3-dehydroquinate + phosphate. It functions in the pathway metabolic intermediate biosynthesis; chorismate biosynthesis; chorismate from D-erythrose 4-phosphate and phosphoenolpyruvate: step 2/7. Catalyzes the conversion of 3-deoxy-D-arabino-heptulosonate 7-phosphate (DAHP) to dehydroquinate (DHQ). This Dehalococcoides mccartyi (strain ATCC BAA-2266 / KCTC 15142 / 195) (Dehalococcoides ethenogenes (strain 195)) protein is 3-dehydroquinate synthase.